Consider the following 438-residue polypeptide: 3-phosphoshikimate 1-carboxyvinyltransferase (438 aa).

Positions 25, 26, and 30 each coordinate 3-phosphoshikimate. Residue lysine 25 participates in phosphoenolpyruvate binding. The phosphoenolpyruvate site is built by glycine 99 and arginine 128. Serine 173, glutamine 175, aspartate 325, and lysine 352 together coordinate 3-phosphoshikimate. Glutamine 175 serves as a coordination point for phosphoenolpyruvate. The active-site Proton acceptor is aspartate 325. Phosphoenolpyruvate is bound by residues arginine 356 and arginine 398.

Belongs to the EPSP synthase family. As to quaternary structure, monomer.

Its subcellular location is the cytoplasm. The catalysed reaction is 3-phosphoshikimate + phosphoenolpyruvate = 5-O-(1-carboxyvinyl)-3-phosphoshikimate + phosphate. It functions in the pathway metabolic intermediate biosynthesis; chorismate biosynthesis; chorismate from D-erythrose 4-phosphate and phosphoenolpyruvate: step 6/7. Catalyzes the transfer of the enolpyruvyl moiety of phosphoenolpyruvate (PEP) to the 5-hydroxyl of shikimate-3-phosphate (S3P) to produce enolpyruvyl shikimate-3-phosphate and inorganic phosphate. The chain is 3-phosphoshikimate 1-carboxyvinyltransferase from Prochlorococcus marinus (strain MIT 9515).